The sequence spans 700 residues: DNA ligase 2 (700 aa).

NAD(+) is bound by residues 42 to 46 (DDAYD) and 89 to 90 (SL). The N6-AMP-lysine intermediate role is filled by Lys-122. NAD(+) contacts are provided by Arg-143, Glu-177, Lys-303, and Lys-327. Cys-421, Cys-424, Cys-437, and Cys-443 together coordinate Zn(2+). Residues 590-621 (MTEPGATPPRPADTDGADGATAEAPGDGGPLA) form a disordered region. The 86-residue stretch at 615–700 (GDGGPLAGMK…FAVLVAGLLS (86 aa)) folds into the BRCT domain.

The protein belongs to the NAD-dependent DNA ligase family. LigA subfamily. Requires Mg(2+) as cofactor. The cofactor is Mn(2+).

The enzyme catalyses NAD(+) + (deoxyribonucleotide)n-3'-hydroxyl + 5'-phospho-(deoxyribonucleotide)m = (deoxyribonucleotide)n+m + AMP + beta-nicotinamide D-nucleotide.. In terms of biological role, DNA ligase that catalyzes the formation of phosphodiester linkages between 5'-phosphoryl and 3'-hydroxyl groups in double-stranded DNA using NAD as a coenzyme and as the energy source for the reaction. It is essential for DNA replication and repair of damaged DNA. This chain is DNA ligase 2, found in Streptomyces coelicolor (strain ATCC BAA-471 / A3(2) / M145).